The primary structure comprises 545 residues: Zinc finger protein 697 (545 aa).

A disordered region spans residues 1–143 (MKQEDNQGVC…EQPAPPVLPW (143 aa)). Lysine 2 is covalently cross-linked (Glycyl lysine isopeptide (Lys-Gly) (interchain with G-Cter in SUMO2)). Residues 23–36 (DFEDSEDREGDPEE) show a composition bias toward acidic residues. Residues 45-55 (DTNKREGHPEP) are compositionally biased toward basic and acidic residues. Composition is skewed to acidic residues over residues 79 to 94 (LSEE…EDDQ) and 118 to 135 (EDDD…EEEQ). 11 C2H2-type zinc fingers span residues 189 to 211 (TICP…QRIH), 261 to 283 (FRCG…LRLH), 289 to 311 (NLCA…RRLH), 317 to 339 (YPCP…RRAH), 353 to 375 (FACG…QRIH), 381 to 403 (HGCG…QRVH), 409 to 431 (YMCS…KRTH), 437 to 459 (YVCR…LRVH), 465 to 487 (FRCG…QRTH), 493 to 515 (YTCI…RRIH), and 521 to 543 (HKCA…QKLH).

Belongs to the krueppel C2H2-type zinc-finger protein family.

It localises to the nucleus. RNA-interacting protein with a high number of miRNA targets. Acts as a damage-induced regulator of muscle remodeling by mediating the interferon gamma response in muscle cells. The polypeptide is Zinc finger protein 697 (Homo sapiens (Human)).